A 417-amino-acid chain; its full sequence is Serine--tRNA ligase (417 aa).

232 to 234 (TAE) serves as a coordination point for L-serine. ATP-binding positions include 263-265 (RRE) and valine 279. Glutamate 286 is a binding site for L-serine. Residue 350 to 353 (EISS) coordinates ATP. Serine 385 provides a ligand contact to L-serine.

It belongs to the class-II aminoacyl-tRNA synthetase family. Type-1 seryl-tRNA synthetase subfamily. As to quaternary structure, homodimer. The tRNA molecule binds across the dimer.

Its subcellular location is the cytoplasm. The enzyme catalyses tRNA(Ser) + L-serine + ATP = L-seryl-tRNA(Ser) + AMP + diphosphate + H(+). The catalysed reaction is tRNA(Sec) + L-serine + ATP = L-seryl-tRNA(Sec) + AMP + diphosphate + H(+). It functions in the pathway aminoacyl-tRNA biosynthesis; selenocysteinyl-tRNA(Sec) biosynthesis; L-seryl-tRNA(Sec) from L-serine and tRNA(Sec): step 1/1. Functionally, catalyzes the attachment of serine to tRNA(Ser). Is also able to aminoacylate tRNA(Sec) with serine, to form the misacylated tRNA L-seryl-tRNA(Sec), which will be further converted into selenocysteinyl-tRNA(Sec). In Leptospira interrogans serogroup Icterohaemorrhagiae serovar copenhageni (strain Fiocruz L1-130), this protein is Serine--tRNA ligase.